A 155-amino-acid chain; its full sequence is S-ribosylhomocysteine lyase (155 aa).

Fe cation-binding residues include His-57, His-61, and Cys-124.

The protein belongs to the LuxS family. In terms of assembly, homodimer. The cofactor is Fe cation.

It catalyses the reaction S-(5-deoxy-D-ribos-5-yl)-L-homocysteine = (S)-4,5-dihydroxypentane-2,3-dione + L-homocysteine. In terms of biological role, involved in the synthesis of autoinducer 2 (AI-2) which is secreted by bacteria and is used to communicate both the cell density and the metabolic potential of the environment. The regulation of gene expression in response to changes in cell density is called quorum sensing. Catalyzes the transformation of S-ribosylhomocysteine (RHC) to homocysteine (HC) and 4,5-dihydroxy-2,3-pentadione (DPD). The sequence is that of S-ribosylhomocysteine lyase from Listeria monocytogenes serovar 1/2a (strain ATCC BAA-679 / EGD-e).